The primary structure comprises 164 residues: Ribonuclease H (164 aa).

Residues 9–150 (DMPRVTIYTD…ADTLANAATD (142 aa)) form the RNase H type-1 domain. The Mg(2+) site is built by Asp18, Glu56, Asp78, and Asp142.

The protein belongs to the RNase H family. In terms of assembly, monomer. Mg(2+) is required as a cofactor.

It localises to the cytoplasm. The enzyme catalyses Endonucleolytic cleavage to 5'-phosphomonoester.. Endonuclease that specifically degrades the RNA of RNA-DNA hybrids. The polypeptide is Ribonuclease H (Chromohalobacter salexigens (strain ATCC BAA-138 / DSM 3043 / CIP 106854 / NCIMB 13768 / 1H11)).